Reading from the N-terminus, the 404-residue chain is Cysteine desulfurase IscS (404 aa).

Pyridoxal 5'-phosphate contacts are provided by residues 75 to 76 (AT), asparagine 155, glutamine 183, and 203 to 205 (SGH). Position 206 is an N6-(pyridoxal phosphate)lysine (lysine 206). Threonine 243 contributes to the pyridoxal 5'-phosphate binding site. Cysteine 328 serves as the catalytic Cysteine persulfide intermediate. A [2Fe-2S] cluster-binding site is contributed by cysteine 328.

It belongs to the class-V pyridoxal-phosphate-dependent aminotransferase family. NifS/IscS subfamily. In terms of assembly, homodimer. Forms a heterotetramer with IscU, interacts with other sulfur acceptors. Pyridoxal 5'-phosphate is required as a cofactor.

Its subcellular location is the cytoplasm. The catalysed reaction is (sulfur carrier)-H + L-cysteine = (sulfur carrier)-SH + L-alanine. It participates in cofactor biosynthesis; iron-sulfur cluster biosynthesis. Its function is as follows. Master enzyme that delivers sulfur to a number of partners involved in Fe-S cluster assembly, tRNA modification or cofactor biosynthesis. Catalyzes the removal of elemental sulfur atoms from cysteine to produce alanine. Functions as a sulfur delivery protein for Fe-S cluster synthesis onto IscU, an Fe-S scaffold assembly protein, as well as other S acceptor proteins. This is Cysteine desulfurase IscS from Shewanella amazonensis (strain ATCC BAA-1098 / SB2B).